Reading from the N-terminus, the 524-residue chain is Anthranilate synthase component 1 (524 aa).

The span at 1 to 16 (MQTTANHSSRSTQTGT) shows a compositional bias: polar residues. The segment at 1–25 (MQTTANHSSRSTQTGTRAHGAALAE) is disordered. L-tryptophan is bound by residues S74 and 298–300 (PYM). Residue 339 to 340 (GT) coordinates chorismate. K355 is covalently cross-linked (Isoglutamyl lysine isopeptide (Lys-Gln) (interchain with Q-Cter in protein Pup)). E366 is a binding site for Mg(2+). Residues Y454, R474, 488-490 (GGG), and G490 each bind chorismate. E503 contacts Mg(2+).

The protein belongs to the anthranilate synthase component I family. Heterotetramer consisting of two non-identical subunits: a beta subunit (TrpG) and a large alpha subunit (TrpE). It depends on Mg(2+) as a cofactor.

It catalyses the reaction chorismate + L-glutamine = anthranilate + pyruvate + L-glutamate + H(+). The protein operates within amino-acid biosynthesis; L-tryptophan biosynthesis; L-tryptophan from chorismate: step 1/5. Its activity is regulated as follows. Feedback inhibited by tryptophan. In terms of biological role, part of a heterotetrameric complex that catalyzes the two-step biosynthesis of anthranilate, an intermediate in the biosynthesis of L-tryptophan. In the first step, the glutamine-binding beta subunit (TrpG) of anthranilate synthase (AS) provides the glutamine amidotransferase activity which generates ammonia as a substrate that, along with chorismate, is used in the second step, catalyzed by the large alpha subunit of AS (TrpE) to produce anthranilate. In the absence of TrpG, TrpE can synthesize anthranilate directly from chorismate and high concentrations of ammonia. In Mycolicibacterium smegmatis (strain ATCC 700084 / mc(2)155) (Mycobacterium smegmatis), this protein is Anthranilate synthase component 1 (trpE).